The sequence spans 502 residues: Glycerol kinase (502 aa).

Residue T13 participates in ADP binding. 3 residues coordinate ATP: T13, T14, and S15. Position 13 (T13) interacts with sn-glycerol 3-phosphate. R17 provides a ligand contact to ADP. Sn-glycerol 3-phosphate is bound by residues R83, E84, Y136, and D246. Glycerol is bound by residues R83, E84, Y136, D246, and Q247. ADP contacts are provided by T268 and G311. ATP-binding residues include T268, G311, Q315, and G412. ADP-binding residues include G412 and N416.

Belongs to the FGGY kinase family.

It catalyses the reaction glycerol + ATP = sn-glycerol 3-phosphate + ADP + H(+). Its pathway is polyol metabolism; glycerol degradation via glycerol kinase pathway; sn-glycerol 3-phosphate from glycerol: step 1/1. With respect to regulation, inhibited by fructose 1,6-bisphosphate (FBP). In terms of biological role, key enzyme in the regulation of glycerol uptake and metabolism. Catalyzes the phosphorylation of glycerol to yield sn-glycerol 3-phosphate. This Francisella tularensis subsp. tularensis (strain FSC 198) protein is Glycerol kinase.